A 263-amino-acid polypeptide reads, in one-letter code: Interleukin-15 receptor subunit alpha (263 aa).

A signal peptide spans 1–32 (MASPQLRGYGVQAIPVLLLLLLLLLLPLRVTP). At 33-205 (GTTCPPPVSI…ISPHSSKMTK (173 aa)) the chain is on the extracellular side. A Sushi domain is found at 34–98 (TTCPPPVSIE…WTTPSLKCIR (65 aa)). Cystine bridges form between C36-C78 and C62-C96. The N-linked (GlcNAc...) asparagine glycan is linked to N51. A compositionally biased stretch (low complexity) spans 113–135 (TPKVTSQPESPSPSAKEPEAFSP). The disordered stretch occupies residues 113 to 178 (TPKVTSQPES…HKSSRAPSLA (66 aa)). Residues 136-145 (KSDTAMTTET) are compositionally biased toward polar residues. A compositionally biased stretch (low complexity) spans 154–169 (TPSQTTSAGTTGTGSH). A helical transmembrane segment spans residues 206–226 (VAISTSVLLVGAGVVMAFLAW). Over 227–263 (YIKSRQPSQPCRVEVETMETVPMTVRASSKEDEDTGA) the chain is Cytoplasmic.

The interleukin-15 receptor IL15R is a heterotrimer of IL15RA, IL2RB and IL2RG. IL15RA also self-associates. Interacts with SYK. N-glycosylated and O-glycosylated. In terms of processing, a soluble form (sIL-15RA) arises from proteolytic shedding of the membrane-anchored receptor. It also binds IL15 and thus interferes with IL15 binding to the membrane receptor. In terms of tissue distribution, widely expressed.

It localises to the membrane. Its subcellular location is the nucleus membrane. The protein localises to the cell surface. The protein resides in the secreted. It is found in the extracellular space. Its function is as follows. High-affinity receptor for interleukin-15. Can signal both in cis and trans where IL15R from one subset of cells presents IL15 to neighboring IL2RG-expressing cells. In neutrophils, binds and activates kinase SYK in response to IL15 stimulation. In neutrophils, required for IL15-induced phagocytosis in a SYK-dependent manner. In Mus musculus (Mouse), this protein is Interleukin-15 receptor subunit alpha (Il15ra).